Reading from the N-terminus, the 156-residue chain is MKLQLVAVGTKMPDWVQTGFTDYLRRFPKDMPFELLEIPAGKRGKNADIKRILEREGEQMLAAVGKGNRIVTLDIPGTRWETPHLAQQLERWKQDGRDVSLLIGGPEGLSPECKAAAEQSWSLSPLTLPHPLVRVLVAESLYRAWSITTNHPYHRE.

Residues leucine 73, glycine 104, and 123-128 (LSPLTL) contribute to the S-adenosyl-L-methionine site.

It belongs to the RNA methyltransferase RlmH family. As to quaternary structure, homodimer.

The protein localises to the cytoplasm. It catalyses the reaction pseudouridine(1915) in 23S rRNA + S-adenosyl-L-methionine = N(3)-methylpseudouridine(1915) in 23S rRNA + S-adenosyl-L-homocysteine + H(+). Its function is as follows. Specifically methylates the pseudouridine at position 1915 (m3Psi1915) in 23S rRNA. The polypeptide is Ribosomal RNA large subunit methyltransferase H (Pectobacterium atrosepticum (strain SCRI 1043 / ATCC BAA-672) (Erwinia carotovora subsp. atroseptica)).